A 712-amino-acid polypeptide reads, in one-letter code: Solute carrier organic anion transporter family member 1C1 (712 aa).

Topologically, residues 1–43 (MDTSSKENIQLFCKTSVQPVGRPSFKTEYPSSEEKQPCCGELK) are cytoplasmic. The helical transmembrane segment at 44 to 63 (VFLCALSFVYFAKALAEGYL) threads the bilayer. The Extracellular segment spans residues 64-82 (KSTITQIERRFDIPSSLVG). A helical transmembrane segment spans residues 83-103 (VIDGSFEIGNLLVITFVSYFG). The Cytoplasmic segment spans residues 104–109 (AKLHRP). Residues 110–134 (KIIGAGCVIMGVGTLLIAMPQFFME) traverse the membrane as a helical segment. At 135 to 184 (QYKYERYSPSSNSTLSISPCLLESSSQLPVSVMEKSKSKISNECEVDTSS) the chain is on the extracellular side. N146 carries an N-linked (GlcNAc...) asparagine glycan. A helical membrane pass occupies residues 185-213 (SMWIYVFLGNLLRGIGETPIQPLGIAYLD). Residues 214–232 (DFASEDNAAFYIGCVQTVA) lie on the Cytoplasmic side of the membrane. The helical transmembrane segment at 233 to 253 (IIGPIFGFLLGSLCAKLYVDI) threads the bilayer. Residues 254–271 (GFVNLDHITITPKDPQWV) lie on the Extracellular side of the membrane. A helical transmembrane segment spans residues 272–296 (GAWWLGYLIAGIISLLAAVPFWYLP). Over 297–348 (KSLPRSQSREDSNSSSEKSKFIIDDHTDYQTPQGENAKIMEMARDFLPSLKN) the chain is Cytoplasmic. Residues 349–370 (LFGNPVYFLYLCTSTVQFNSLF) traverse the membrane as a helical segment. Residues 371 to 390 (GMVTYKPKYIEQQYGQSSSR) lie on the Extracellular side of the membrane. A helical transmembrane segment spans residues 391–414 (ANFVIGLINIPAVALGIFSGGIVM). At 415 to 418 (KKFR) the chain is on the cytoplasmic side. The chain crosses the membrane as a helical span at residues 419 to 442 (ISVCGAAKLYLGSSVFGYLLFLSL). Residues 443-554 (FALGCENSDV…NGCPQMFLYF (112 aa)) are Extracellular-facing. Residues 470–525 (RALFSDCNSRCKCSETKWEPMCGENGITYVSACLAGCQTSNRSGKNIIFYNCTCVG) enclose the Kazal-like domain. Disulfide bonds link C476-C506, C482-C502, and C491-C523. 3 N-linked (GlcNAc...) asparagine glycosylation sites follow: N510, N520, and N533. Residues 555–577 (LVISVITSYTLSLGGIPGYILLL) traverse the membrane as a helical segment. The Cytoplasmic portion of the chain corresponds to 578-586 (RCIKPQLKS). Residues 587-612 (FALGIYTLAIRVLAGIPAPVYFGVLI) form a helical membrane-spanning segment. The Extracellular portion of the chain corresponds to 613–646 (DTSCLKWGFKRCGSRGSCRLYDSNVFRHIYLGLT). Residues 647 to 664 (VILGTVSILLSIAVLFIL) form a helical membrane-spanning segment. Residues 665 to 712 (KKNYVSKHRSFITKRERTMVSTRFQKENYTTSDHLLQPNYWPGKETQL) lie on the Cytoplasmic side of the membrane.

Belongs to the organo anion transporter (TC 2.A.60) family. In terms of tissue distribution, highly expressed in brain and in Leydig cells in testis. Localized in nests of Leydig cells (at protein level). Expressed in choroid plexus (at protein level). Not strongly enriched in cerebral microvessels.

It localises to the cell membrane. The catalysed reaction is 3,3',5'-triiodo-L-thyronine(out) = 3,3',5'-triiodo-L-thyronine(in). It catalyses the reaction L-thyroxine(out) = L-thyroxine(in). The enzyme catalyses L-thyroxine sulfate(out) = L-thyroxine sulfate(in). Its function is as follows. Mediates the Na(+)-independent high affinity transport of organic anions such as the thyroid hormones L-thyroxine (T4), L-thyroxine sulfate (T4S), and 3,3',5'-triiodo-L-thyronine (reverse T3, rT3) at the plasma membrane. Regulates T4 levels in different brain regions by transporting T4, and also by serving as an export pump for T4S, which is a source of T4 after hydrolysis by local sulfatases. Increases the access of these substrates to the intracellular sites where they are metabolized by the deiodinases. Other potential substrates, such as triiodothyronine (T3), 17-beta-glucuronosyl estradiol (17beta-estradiol 17-O-(beta-D-glucuronate)), estrone-3-sulfate (E1S) and sulfobromophthalein (BSP) are transported with much lower efficiency. Transports T4 and E1S in a pH-insensitive manner. Facilitates the transport of thyroid hormones across the blood-brain barrier and into glia and neuronal cells in the brain. The protein is Solute carrier organic anion transporter family member 1C1 (SLCO1C1) of Homo sapiens (Human).